A 291-amino-acid chain; its full sequence is Serine hydrolase BPHL (291 aa).

A signal peptide spans 1 to 37; sequence MATATVRPAAQRLRLLLSPLKSRICVPQAEPVATFGT. The AB hydrolase-1 domain maps to 62-173; the sequence is AILLLPGMLG…ANAYVTEEDS (112 aa). An N6-acetyllysine; alternate modification is found at lysine 74. Position 74 is an N6-succinyllysine; alternate (lysine 74). N6-acetyllysine is present on residues lysine 86 and lysine 119. An N6-acetyllysine; alternate modification is found at lysine 126. The residue at position 126 (lysine 126) is an N6-succinyllysine; alternate. The active-site Nucleophile is serine 139. Lysine 184 is modified (N6-succinyllysine). Residue lysine 191 is modified to N6-acetyllysine; alternate. Position 191 is an N6-succinyllysine; alternate (lysine 191). The residue at position 217 (lysine 217) is an N6-acetyllysine. A Mg(2+)-binding site is contributed by glutamate 221. N6-acetyllysine is present on lysine 243. Aspartate 244 acts as the Charge relay system in catalysis. Residues lysine 260 and lysine 271 each carry the N6-acetyllysine; alternate modification. N6-succinyllysine; alternate is present on residues lysine 260 and lysine 271. Residue histidine 272 is the Charge relay system of the active site.

The protein belongs to the AB hydrolase superfamily. Lipase family. As to quaternary structure, monomer. May also form homodimers.

The protein resides in the mitochondrion. It carries out the reaction L-homocysteine thiolactone + H2O = L-homocysteine + H(+). The enzyme catalyses valacyclovir + H2O = acyclovir + L-valine + H(+). In terms of biological role, specific alpha-amino acid ester serine hydrolase that prefers small, hydrophobic, and aromatic side chains and does not have a stringent requirement for the leaving group other than preferring a primary alcohol. Has homocysteine-thiolactonase activity (in vitro) and may play a significant role in the detoxification of homocysteine thiolactone in vivo. Catalyzes the hydrolytic activation of amino acid ester prodrugs of nucleoside analogs such as valacyclovir and valganciclovir, converting them into their active forms (acyclovir and ganciclovir). The chain is Serine hydrolase BPHL (Bphl) from Mus musculus (Mouse).